Here is a 1664-residue protein sequence, read N- to C-terminus: DNA-directed RNA polymerase I subunit RPA190 (1664 aa).

Positions 62, 65, 72, 75, 102, 105, 233, and 236 each coordinate Zn(2+). The disordered stretch occupies residues 280–310 (QAKKLDGSNEASANDEESFDVGRNPTTRPKT). Mg(2+)-binding residues include Asp-627, Asp-629, and Asp-631. The residue at position 889 (Ser-889) is a Phosphoserine. Residues 992 to 1004 (PQEYYFHCMAGRE) form a bridging helix region. A disordered region spans residues 1343–1423 (DIGVAVPRLQ…DSDSEDEDVD (81 aa)). The span at 1393 to 1414 (ETMREAEKSSDEEGIDSDKESD) shows a compositional bias: basic and acidic residues. A Phosphoserine modification is found at Ser-1636.

It belongs to the RNA polymerase beta' chain family. In terms of assembly, component of the RNA polymerase I (Pol I) complex consisting of 14 subunits: RPA135, RPA190, RPC40, RPA14, RPB5, RPO26, RPA43, RPB8, RPA12, RPB10, RPC19, RPC10, RPA49 and RPA34. The complex is composed of a horseshoe-shaped core containing ten subunits (RPA135, RPA190, RPB5, RPO26, RPB8, RPB10, RPC10, RPA12, RPC19 and RPC40) where RPA135 and RPA190 form the DNA-binding cleft. Outside of the core, RPA14 and RPA43 form the stalk that mediates interactions with transcription initiation factors and newly synthesized RNA.

It is found in the nucleus. It localises to the nucleolus. It catalyses the reaction RNA(n) + a ribonucleoside 5'-triphosphate = RNA(n+1) + diphosphate. Its function is as follows. DNA-dependent RNA polymerases catalyze the transcription of DNA into RNA using the four ribonucleoside triphosphates as substrates. Component of RNA polymerase I (Pol I) which synthesizes ribosomal RNA precursors. Besides, RNA polymerase I has intrinsic RNA cleavage activity. RPA190 and RPA135 both contribute to the polymerase catalytic activity and together form the Pol I active center. In addition, subunit RPA12 contributes a catalytic zinc ribbon that is required for RNA cleavage by Pol I. A single stranded DNA template strand of the promoter is positioned within the central active site cleft of Pol I. A bridging helix emanates from RPA190 and crosses the cleft near the catalytic site and is thought to promote translocation of Pol I by acting as a ratchet that moves the RNA-DNA hybrid through the active site by switching from straight to bent conformations at each step of nucleotide addition. The sequence is that of DNA-directed RNA polymerase I subunit RPA190 (RPA190) from Saccharomyces cerevisiae (strain ATCC 204508 / S288c) (Baker's yeast).